Consider the following 143-residue polypeptide: Large ribosomal subunit protein uL13 (143 aa).

This sequence belongs to the universal ribosomal protein uL13 family. In terms of assembly, part of the 50S ribosomal subunit.

Its function is as follows. This protein is one of the early assembly proteins of the 50S ribosomal subunit, although it is not seen to bind rRNA by itself. It is important during the early stages of 50S assembly. In Methanosarcina acetivorans (strain ATCC 35395 / DSM 2834 / JCM 12185 / C2A), this protein is Large ribosomal subunit protein uL13.